We begin with the raw amino-acid sequence, 92 residues long: UPF0235 protein PYRAB05010 (92 aa).

The protein belongs to the UPF0235 family.

This is UPF0235 protein PYRAB05010 from Pyrococcus abyssi (strain GE5 / Orsay).